Reading from the N-terminus, the 365-residue chain is Isopentenyl-diphosphate delta-isomerase (365 aa).

Arg8–Lys9 lines the substrate pocket. FMN-binding positions include Ser67–Thr69, Ser97, and Asn126. Ser97 to Arg99 provides a ligand contact to substrate. Residue Gln160 participates in substrate binding. A Mg(2+)-binding site is contributed by Glu161. FMN is bound by residues Lys192, Thr222, Gly272–Arg274, and Ala293–Leu294.

This sequence belongs to the IPP isomerase type 2 family. In terms of assembly, homooctamer. Dimer of tetramers. FMN is required as a cofactor. Requires NADPH as cofactor. It depends on Mg(2+) as a cofactor.

The protein resides in the cytoplasm. It carries out the reaction isopentenyl diphosphate = dimethylallyl diphosphate. Functionally, involved in the biosynthesis of isoprenoids. Catalyzes the 1,3-allylic rearrangement of the homoallylic substrate isopentenyl (IPP) to its allylic isomer, dimethylallyl diphosphate (DMAPP). This Methanosarcina mazei (strain ATCC BAA-159 / DSM 3647 / Goe1 / Go1 / JCM 11833 / OCM 88) (Methanosarcina frisia) protein is Isopentenyl-diphosphate delta-isomerase.